Here is a 559-residue protein sequence, read N- to C-terminus: MLKHVAAALLLATAMPVVAQSPAPAAAPAPAARSIAATPPKLIVAISVDQFSADLFSEYRQYYTGGLKRLTSEGAVFPRGYQSHAATETCPGHSTILTGSRPSRTGIIANNWFDLDAKREDKNLYCAEDESQPGSSSDKYEASPLHLKVPTLGGRMKAANPATRVVSVAGKDRAAIMMGGATADQVWWLGGPQGYVSYKGVAPTPLVTQVNQAFAQRLAQPNPGFELPAQCVSKDFPVQAGNRTVGTGRFARDAGDYKGFRISPEQDAMTLAFAAAAIENMQLGKQAQTDIISIGLSATDYVGHTFGTEGTESCIQVDRLDTELGAFFDKLDKDGIDYVVVLTADHGGHDLPERHRMNAMPMEQRVDMALTPKALNATIAEKAGLPGKKVIWSDGPSGDIYYDKGLTAAQRARVETEALKYLRAHPQVQTVFTKAEIAATPSPSGPPESWSLIQEARASFYPSRSGDLLLLLKPRVMSIPEQAVMGSVATHGSPWDTDRRVPILFWRKGMQHFEQPLGVETVDILPSLAALIKLPVPKDQIDGRCLDLVAGKDDSCAGQ.

The first 19 residues, 1–19 (MLKHVAAALLLATAMPVVA), serve as a signal peptide directing secretion. Asp-49 and Thr-89 together coordinate Zn(2+). Catalysis depends on Thr-89, which acts as the Phosphothreonine intermediate. Cys-90 and Cys-126 are disulfide-bonded. Residues Asn-110 and 171–173 (KDR) each bind substrate. A disulfide bridge links Cys-231 with Cys-314. The Zn(2+) site is built by Asp-300, His-304, Asp-345, His-346, and His-491. Cys-545 and Cys-556 are joined by a disulfide.

As to quaternary structure, monomer. Zn(2+) is required as a cofactor.

It localises to the secreted. The catalysed reaction is a phosphate monoester + H2O = an alcohol + phosphate. In terms of biological role, alkaline phosphatase with broad substrate specificity. Precipitates uranium from alkaline solutions. This is Alkaline phosphatase PhoK from Sphingomonas sp.